The sequence spans 500 residues: Probable malate:quinone oxidoreductase (500 aa).

This sequence belongs to the MQO family. It depends on FAD as a cofactor.

The enzyme catalyses (S)-malate + a quinone = a quinol + oxaloacetate. The protein operates within carbohydrate metabolism; tricarboxylic acid cycle; oxaloacetate from (S)-malate (quinone route): step 1/1. This Halalkalibacterium halodurans (strain ATCC BAA-125 / DSM 18197 / FERM 7344 / JCM 9153 / C-125) (Bacillus halodurans) protein is Probable malate:quinone oxidoreductase.